Here is a 79-residue protein sequence, read N- to C-terminus: Translational regulator CsrA (79 aa).

This sequence belongs to the CsrA/RsmA family. As to quaternary structure, homodimer; the beta-strands of each monomer intercalate to form a hydrophobic core, while the alpha-helices form wings that extend away from the core.

The protein localises to the cytoplasm. A translational regulator that binds mRNA to regulate translation initiation and/or mRNA stability. Usually binds in the 5'-UTR at or near the Shine-Dalgarno sequence preventing ribosome-binding, thus repressing translation. Its main target seems to be the major flagellin gene, while its function is anatagonized by FliW. This Maridesulfovibrio salexigens (strain ATCC 14822 / DSM 2638 / NCIMB 8403 / VKM B-1763) (Desulfovibrio salexigens) protein is Translational regulator CsrA.